The chain runs to 2363 residues: Highly reducing polyketide synthase cnsI (2363 aa).

The Ketosynthase family 3 (KS3) domain occupies 14–440 (PEPIAIIGMS…GSNAHAIVES (427 aa)). Catalysis depends on for beta-ketoacyl synthase activity residues Cys-187, His-322, and His-363. The segment at 546–854 (LAFVFTGQGA…FLQVLKSINA (309 aa)) is malonyl-CoA:ACP transacylase (MAT) domain. Ser-638 acts as the For malonyltransferase activity in catalysis. Residues 938 to 1068 (HDLLGSPMDF…GTFTLHYDAR (131 aa)) are N-terminal hotdog fold. A dehydratase (DH) domain region spans residues 938–1224 (HDLLGSPMDF…RLDSIASDVS (287 aa)). In terms of domain architecture, PKS/mFAS DH spans 938-1246 (HDLLGSPMDF…LGPVPMSKVP (309 aa)). The active-site Proton acceptor; for dehydratase activity is His-970. The C-terminal hotdog fold stretch occupies residues 1089–1246 (TAECETNRDA…LGPVPMSKVP (158 aa)). Asp-1159 acts as the Proton donor; for dehydratase activity in catalysis. The enoylreductase (ER) domain stretch occupies residues 1669 to 1976 (GGQWVEDRQL…ARQTGISVAI (308 aa)). Residues 2001 to 2177 (TYLLAGGLGM…PGHSIDIGLV (177 aa)) are catalytic ketoreductase (KRc) domain. One can recognise a Carrier domain in the interval 2279-2357 (EDASYVVNQA…VLSEKIAAQS (79 aa)). Position 2317 is an O-(pantetheine 4'-phosphoryl)serine (Ser-2317).

The protein operates within alkaloid biosynthesis. Highly reducing polyketide synthase; part of the gene cluster that mediates the biosynthesis of communesins, a prominent class of indole alkaloids with great potential as pharmaceuticals. Communesins are biosynthesized by the coupling of tryptamine and aurantioclavine, two building blocks derived from L-tryptophan. The L-tryptophan decarboxylase cnsB converts L-tryptophan to tryptamine, whereas the tryptophan dimethylallyltransferase cnsF converts L-tryptophan to 4-dimethylallyl tryptophan which is further transformed to aurantioclavine by the aurantioclavine synthase cnsA, probably aided by the catalase cnsD. The cytochrome P450 monooxygenase cnsC catalyzes the heterodimeric coupling between the two different indole moieties, tryptamine and aurantioclavine, to construct vicinal quaternary stereocenters and yield the heptacyclic communesin scaffold. The O-methyltransferase cnsE then methylates the communesin scaffold to produce communesin K, the simplest characterized communesin that contains the heptacyclic core. The dioxygenase cnsJ converts communesin K into communesin I. Acylation to introduce the hexadienyl group at position N16 of communesin I by the acyltransferase cnsK leads to the production of communesin B. The hexadienyl group is produced by the highly reducing polyketide synthase cnsI, before being hydrolytically removed from cnsI by the serine hydrolase cnsH, converted into hexadienyl-CoA by the CoA ligase cnsG, and then transferred to communesin I by cnsK. Surprisingly, cnsK may also be a promiscuous acyltransferase that can tolerate a range of acyl groups, including acetyl-, propionyl-, and butyryl-CoA, which lead to communesins A, G and H respectively. The roles of the alpha-ketoglutarate-dependent dioxygenases cnsM and cnsP have still to be determined. In Penicillium expansum (Blue mold rot fungus), this protein is Highly reducing polyketide synthase cnsI.